The following is a 353-amino-acid chain: DNA-directed RNA polymerase subunit alpha (353 aa).

Positions 1–226 (MLISQRPTLT…ELFGLARELN (226 aa)) are alpha N-terminal domain (alpha-NTD). The alpha C-terminal domain (alpha-CTD) stretch occupies residues 241 to 353 (ADHIASFGLP…TEDYAETEQL (113 aa)). Residues 326-353 (ATGTWSDTDAGSFGDAEGTEDYAETEQL) form a disordered region. The span at 342 to 353 (EGTEDYAETEQL) shows a compositional bias: acidic residues.

Belongs to the RNA polymerase alpha chain family. Homodimer. The RNAP catalytic core consists of 2 alpha, 1 beta, 1 beta' and 1 omega subunit. When a sigma factor is associated with the core the holoenzyme is formed, which can initiate transcription.

It carries out the reaction RNA(n) + a ribonucleoside 5'-triphosphate = RNA(n+1) + diphosphate. DNA-dependent RNA polymerase catalyzes the transcription of DNA into RNA using the four ribonucleoside triphosphates as substrates. In Rhodococcus jostii (strain RHA1), this protein is DNA-directed RNA polymerase subunit alpha.